We begin with the raw amino-acid sequence, 318 residues long: MQHNLKTIFVISHSTLTIILFTELVTGIIGNGFMALVHCMDWLRRKKISLVNQILTALAISRIFQLCLLFISLVISFSYPDLTTTSLIKVTCNLWIIVNHFNIWLATCLGIFYFLKISNFSNSLFLYLKWRVEKVVLVTLLVSLVLLTLNSLLINLEINICINEYQRNITYSFNSYYHANCHRQMLSLHIIFLSVPFVLSLSTFLLLIFSLGTHHKKMQQHVQGRRDASTMAHFKALQTVIAFLLLYSIFILSVLVQIWKYELLKKNLFILFCQVAYVAFPSFHSYILILGDMKMRQACLSVLWWQKFRKNYVEPLDL.

At 1–16 the chain is on the extracellular side; that stretch reads MQHNLKTIFVISHSTL. Residues 17 to 37 traverse the membrane as a helical segment; it reads TIILFTELVTGIIGNGFMALV. Topologically, residues 38-53 are cytoplasmic; that stretch reads HCMDWLRRKKISLVNQ. A helical membrane pass occupies residues 54-74; the sequence is ILTALAISRIFQLCLLFISLV. The Extracellular portion of the chain corresponds to 75–93; it reads ISFSYPDLTTTSLIKVTCN. Residues 94–114 traverse the membrane as a helical segment; sequence LWIIVNHFNIWLATCLGIFYF. Topologically, residues 115-134 are cytoplasmic; the sequence is LKISNFSNSLFLYLKWRVEK. The chain crosses the membrane as a helical span at residues 135-155; it reads VVLVTLLVSLVLLTLNSLLIN. Over 156–189 the chain is Extracellular; that stretch reads LEINICINEYQRNITYSFNSYYHANCHRQMLSLH. N168 carries N-linked (GlcNAc...) asparagine glycosylation. Residues 190 to 210 traverse the membrane as a helical segment; the sequence is IIFLSVPFVLSLSTFLLLIFS. The Cytoplasmic portion of the chain corresponds to 211 to 238; that stretch reads LGTHHKKMQQHVQGRRDASTMAHFKALQ. Residues 239-259 traverse the membrane as a helical segment; that stretch reads TVIAFLLLYSIFILSVLVQIW. Residues 260 to 268 lie on the Extracellular side of the membrane; that stretch reads KYELLKKNL. Residues 269–289 traverse the membrane as a helical segment; that stretch reads FILFCQVAYVAFPSFHSYILI. The Cytoplasmic portion of the chain corresponds to 290–318; it reads LGDMKMRQACLSVLWWQKFRKNYVEPLDL.

Belongs to the G-protein coupled receptor T2R family.

It is found in the membrane. Its function is as follows. Putative taste receptor which may play a role in the perception of bitterness. This chain is Taste receptor type 2 member 117, found in Rattus norvegicus (Rat).